Here is a 267-residue protein sequence, read N- to C-terminus: Aspartate/glutamate leucyltransferase (267 aa).

The interval 246–267 (EQEEQTRPLFRPSATGFSTGQE) is disordered.

The protein belongs to the R-transferase family. Bpt subfamily.

The protein resides in the cytoplasm. The catalysed reaction is N-terminal L-glutamyl-[protein] + L-leucyl-tRNA(Leu) = N-terminal L-leucyl-L-glutamyl-[protein] + tRNA(Leu) + H(+). It carries out the reaction N-terminal L-aspartyl-[protein] + L-leucyl-tRNA(Leu) = N-terminal L-leucyl-L-aspartyl-[protein] + tRNA(Leu) + H(+). In terms of biological role, functions in the N-end rule pathway of protein degradation where it conjugates Leu from its aminoacyl-tRNA to the N-termini of proteins containing an N-terminal aspartate or glutamate. The protein is Aspartate/glutamate leucyltransferase of Granulibacter bethesdensis (strain ATCC BAA-1260 / CGDNIH1).